Here is an 824-residue protein sequence, read N- to C-terminus: MAFPINLTQTLLFFFCPLLHLSFAAFTPTDNYLINSGSNTNTSFFTTRSFLSDSSEPGSSFLSTDRSISISDTNPSPDSPVLYNTARVFPVGGSYKFQVTTKGTHFIRLHFAPFKASRFNLRSAKFRVLINGFSVINSFSTSSVVVKEFILKIDDPVLEISFLPFKASGFGFVNAVEVFSAPKDYIMDQGTKLVIPNSAQIFSNLSSQVLETVHRINVGGSKLTPFNDTLWRTWVVDDNYLLLRAAARRAWTTHSPNYQNGGATREIAPDNVYMTAQEMDRDNQELQARFNISWGFQVDEKRVLHLVRLHFCDIVSSSLNQLYFNVFINEYLAFKDVDLSTLTFHVLASPLYIDFVAESDRSGMLRISVGPSDLSNPARVNALLNGVEIMRILSPVSSEVVSGKRNVVWIVVGSVLGGFVFLSLFFLSVLCLCRRKNNKTRSSESTGWTPLRRFRGSSNSRTTERTVSSSGYHTLRISFAELQSGTNNFDRSLVIGVGGFGMVFRGSLKDNTKVAVKRGSPGSRQGLPEFLSEITILSKIRHRHLVSLVGYCEEQSEMILVYEYMDKGPLKSHLYGSTNPPLSWKQRLEVCIGAARGLHYLHTGSSQGIIHRDIKSTNILLDNNYVAKVADFGLSRSGPCIDETHVSTGVKGSFGYLDPEYFRRQQLTDKSDVYSFGVVLFEVLCARPAVDPLLVREQVNLAEWAIEWQRKGMLDQIVDPNIADEIKPCSLKKFAETAEKCCADYGVDRPTIGDVLWNLEHVLQLQESGPLNIPEEDYGDVTDPRTARQGLSNGSNIERDYGDGTSGIISSTQVFSQLMTNAGR.

The first 24 residues, 1-24 (MAFPINLTQTLLFFFCPLLHLSFA), serve as a signal peptide directing secretion. N-linked (GlcNAc...) asparagine glycans are attached at residues Asn-6, Asn-41, Asn-204, Asn-227, and Asn-291. At 25 to 406 (AFTPTDNYLI…SSEVVSGKRN (382 aa)) the chain is on the extracellular side. A helical membrane pass occupies residues 407–427 (VVWIVVGSVLGGFVFLSLFFL). The Cytoplasmic segment spans residues 428–824 (SVLCLCRRKN…FSQLMTNAGR (397 aa)). The disordered stretch occupies residues 440-467 (TRSSESTGWTPLRRFRGSSNSRTTERTV). The segment covering 456–467 (GSSNSRTTERTV) has biased composition (polar residues). Residues 489–764 (FDRSLVIGVG…VLWNLEHVLQ (276 aa)) enclose the Protein kinase domain. ATP is bound by residues 495–503 (IGVGGFGMV) and Lys-517. The active-site Proton acceptor is the Asp-613. The tract at residues 777 to 803 (DYGDVTDPRTARQGLSNGSNIERDYGD) is disordered.

It belongs to the protein kinase superfamily. Ser/Thr protein kinase family.

The protein resides in the membrane. In Arabidopsis thaliana (Mouse-ear cress), this protein is Probable receptor-like protein kinase At5g24010.